The following is a 503-amino-acid chain: Probable cytosol aminopeptidase (503 aa).

Residues Lys-270 and Asp-275 each contribute to the Mn(2+) site. Residue Lys-282 is part of the active site. Residues Asp-293, Asp-352, and Glu-354 each contribute to the Mn(2+) site. Arg-356 is a catalytic residue.

It belongs to the peptidase M17 family. It depends on Mn(2+) as a cofactor.

The protein resides in the cytoplasm. It carries out the reaction Release of an N-terminal amino acid, Xaa-|-Yaa-, in which Xaa is preferably Leu, but may be other amino acids including Pro although not Arg or Lys, and Yaa may be Pro. Amino acid amides and methyl esters are also readily hydrolyzed, but rates on arylamides are exceedingly low.. The catalysed reaction is Release of an N-terminal amino acid, preferentially leucine, but not glutamic or aspartic acids.. Its function is as follows. Presumably involved in the processing and regular turnover of intracellular proteins. Catalyzes the removal of unsubstituted N-terminal amino acids from various peptides. The chain is Probable cytosol aminopeptidase from Enterobacter sp. (strain 638).